A 612-amino-acid polypeptide reads, in one-letter code: Cytokine-like nuclear factor N-PAC (612 aa).

Positions proline 22 to proline 81 constitute a PWWP domain. The interval alanine 168 to arginine 270 is disordered. Low complexity-rich tracts occupy residues serine 177–serine 193 and alanine 201–serine 220. Residues alanine 228–leucine 240 are compositionally biased toward polar residues. The segment at aspartate 276–leucine 279 is interaction with histone H3. A dehydrogenase domain region spans residues arginine 319 to phenylalanine 612. NAD(+) is bound by residues glycine 329–aspartate 343, threonine 421, and arginine 564.

Belongs to the HIBADH-related family. NP60 subfamily. In terms of assembly, binds to mononucleosomes. Interacts with male-specific lethal (MSL) histone acetyltransferase complex at least composed of mof, msl-1, msl-2 and msl-3.

The protein resides in the chromosome. Nucleosome-destabilizing factor that is recruited to genes during transcriptional activation and colocalizes with a subset of trimethylated 'Lys-36' histone H3 (H3K36me3)-enriched regions. Binds DNA (in vitro). Facilitates Pol II transcription through nucleosomes. Facilitates male-specific lethal (MSL) histone acetyltransferase complex targeting to active genes on the X chromosome. Stimulates the acetylation of 'Lys-56' of nucleosomal histone H3 (H3K56ac) by nej. The chain is Cytokine-like nuclear factor N-PAC from Drosophila pseudoobscura pseudoobscura (Fruit fly).